Here is a 350-residue protein sequence, read N- to C-terminus: SUMO-activating enzyme subunit 1 (350 aa).

Met-1 is subject to N-acetylmethionine. Val-2 bears the N-acetylvaline; in SUMO-activating enzyme subunit 1, N-terminally processed mark. Ser-16 is subject to Phosphoserine. Position 202 is an N6-acetyllysine (Lys-202).

This sequence belongs to the ubiquitin-activating E1 family. Heterodimer of SAE1 and UBA2/SAE2. The heterodimer corresponds to the two domains that are encoded on a single polypeptide chain in ubiquitin-activating enzyme E1. Interacts with UBE2I. As to expression, broadly expressed, with highest levels in testis.

The protein localises to the nucleus. Its pathway is protein modification; protein sumoylation. Functionally, the heterodimer acts as an E1 ligase for SUMO1, SUMO2, SUMO3, and probably SUMO4. It mediates ATP-dependent activation of SUMO proteins followed by formation of a thioester bond between a SUMO protein and a conserved active site cysteine residue on UBA2/SAE2. The chain is SUMO-activating enzyme subunit 1 (Sae1) from Mus musculus (Mouse).